The following is a 704-amino-acid chain: Penicillin-binding protein H (704 aa).

Residues 23 to 43 form a helical membrane-spanning segment; the sequence is FFLAVFVLFTALIFKLGVVQI. Residues 197–223 are disordered; it reads MNPNKSNSNGKNGALLDEKKNSSQRPK. Positions 200–209 are enriched in low complexity; it reads NKSNSNGKNG. Residues 212 to 223 are compositionally biased toward basic and acidic residues; sequence LDEKKNSSQRPK. The Acyl-ester intermediate role is filled by Ser415.

The protein belongs to the transpeptidase family.

It localises to the cell membrane. It carries out the reaction Preferential cleavage: (Ac)2-L-Lys-D-Ala-|-D-Ala. Also transpeptidation of peptidyl-alanyl moieties that are N-acyl substituents of D-alanine.. It participates in cell wall biogenesis; peptidoglycan biosynthesis. Involved in the polymerization of peptidoglycan. Plays a redundant role with PBP-2A (pbpA) in determining the rod shape of the cell during vegetative growth and spore outgrowth. The sequence is that of Penicillin-binding protein H from Bacillus subtilis (strain 168).